A 140-amino-acid polypeptide reads, in one-letter code: Large-conductance mechanosensitive channel (140 aa).

2 consecutive transmembrane segments (helical) span residues 21–41 (VGVIIGGAFGKIVESLVGDVI) and 82–102 (GSFITVAINFMILAFIIFMMI).

The protein belongs to the MscL family. As to quaternary structure, homopentamer.

The protein resides in the cell inner membrane. Its function is as follows. Channel that opens in response to stretch forces in the membrane lipid bilayer. May participate in the regulation of osmotic pressure changes within the cell. The chain is Large-conductance mechanosensitive channel from Leptothrix cholodnii (strain ATCC 51168 / LMG 8142 / SP-6) (Leptothrix discophora (strain SP-6)).